The primary structure comprises 325 residues: Beta-ketoacyl-[acyl-carrier-protein] synthase III (325 aa).

Catalysis depends on residues C113 and H250. Residues 251–255 (QANIR) are ACP-binding. Residue N280 is part of the active site.

The protein belongs to the thiolase-like superfamily. FabH family. In terms of assembly, homodimer.

It localises to the cytoplasm. The enzyme catalyses malonyl-[ACP] + acetyl-CoA + H(+) = 3-oxobutanoyl-[ACP] + CO2 + CoA. It functions in the pathway lipid metabolism; fatty acid biosynthesis. Catalyzes the condensation reaction of fatty acid synthesis by the addition to an acyl acceptor of two carbons from malonyl-ACP. Catalyzes the first condensation reaction which initiates fatty acid synthesis and may therefore play a role in governing the total rate of fatty acid production. Possesses both acetoacetyl-ACP synthase and acetyl transacylase activities. Its substrate specificity determines the biosynthesis of branched-chain and/or straight-chain of fatty acids. In Streptococcus suis (strain 98HAH33), this protein is Beta-ketoacyl-[acyl-carrier-protein] synthase III.